Consider the following 332-residue polypeptide: Beta-ketoacyl-[acyl-carrier-protein] synthase III (332 aa).

Catalysis depends on residues C116 and H257. The interval 258–262 (QANQR) is ACP-binding. The active site involves N287.

The protein belongs to the thiolase-like superfamily. FabH family. Homodimer.

Its subcellular location is the cytoplasm. It carries out the reaction malonyl-[ACP] + acetyl-CoA + H(+) = 3-oxobutanoyl-[ACP] + CO2 + CoA. The protein operates within lipid metabolism; fatty acid biosynthesis. In terms of biological role, catalyzes the condensation reaction of fatty acid synthesis by the addition to an acyl acceptor of two carbons from malonyl-ACP. Catalyzes the first condensation reaction which initiates fatty acid synthesis and may therefore play a role in governing the total rate of fatty acid production. Possesses both acetoacetyl-ACP synthase and acetyl transacylase activities. Its substrate specificity determines the biosynthesis of branched-chain and/or straight-chain of fatty acids. This is Beta-ketoacyl-[acyl-carrier-protein] synthase III from Acaryochloris marina (strain MBIC 11017).